A 69-amino-acid polypeptide reads, in one-letter code: MYVVTPLLLRGLTGSARRLPVPRAQVHSMPPEQKLGVLELAIGFTSCMVTFLLPAGWIMSHLESYKKRG.

Residues 1 to 25 (MYVVTPLLLRGLTGSARRLPVPRAQ) constitute a mitochondrion transit peptide. The SIFI-degron motif lies at 2 to 19 (YVVTPLLLRGLTGSARRL). Residues 26–36 (VHSMPPEQKLG) are Mitochondrial matrix-facing. Residues 37–60 (VLELAIGFTSCMVTFLLPAGWIMS) traverse the membrane as a helical segment. Residues 61 to 69 (HLESYKKRG) are Mitochondrial intermembrane-facing.

This sequence belongs to the cytochrome c oxidase VIII family. As to quaternary structure, component of the cytochrome c oxidase (complex IV, CIV), a multisubunit enzyme composed of 14 subunits. The complex is composed of a catalytic core of 3 subunits MT-CO1, MT-CO2 and MT-CO3, encoded in the mitochondrial DNA, and 11 supernumerary subunits COX4I, COX5A, COX5B, COX6A, COX6B, COX6C, COX7A, COX7B, COX7C, COX8 and NDUFA4, which are encoded in the nuclear genome. The complex exists as a monomer or a dimer and forms supercomplexes (SCs) in the inner mitochondrial membrane with NADH-ubiquinone oxidoreductase (complex I, CI) and ubiquinol-cytochrome c oxidoreductase (cytochrome b-c1 complex, complex III, CIII), resulting in different assemblies (supercomplex SCI(1)III(2)IV(1) and megacomplex MCI(2)III(2)IV(2)). Post-translationally, in response to mitochondrial stress, the precursor protein is ubiquitinated by the SIFI complex in the cytoplasm before mitochondrial import, leading to its degradation. Within the SIFI complex, UBR4 initiates ubiquitin chain that are further elongated or branched by KCMF1.

The protein localises to the mitochondrion inner membrane. It functions in the pathway energy metabolism; oxidative phosphorylation. In terms of biological role, component of the cytochrome c oxidase, the last enzyme in the mitochondrial electron transport chain which drives oxidative phosphorylation. The respiratory chain contains 3 multisubunit complexes succinate dehydrogenase (complex II, CII), ubiquinol-cytochrome c oxidoreductase (cytochrome b-c1 complex, complex III, CIII) and cytochrome c oxidase (complex IV, CIV), that cooperate to transfer electrons derived from NADH and succinate to molecular oxygen, creating an electrochemical gradient over the inner membrane that drives transmembrane transport and the ATP synthase. Cytochrome c oxidase is the component of the respiratory chain that catalyzes the reduction of oxygen to water. Electrons originating from reduced cytochrome c in the intermembrane space (IMS) are transferred via the dinuclear copper A center (CU(A)) of subunit 2 and heme A of subunit 1 to the active site in subunit 1, a binuclear center (BNC) formed by heme A3 and copper B (CU(B)). The BNC reduces molecular oxygen to 2 water molecules using 4 electrons from cytochrome c in the IMS and 4 protons from the mitochondrial matrix. This chain is Cytochrome c oxidase subunit 8A, mitochondrial (COX8A), found in Ateles belzebuth (White-bellied spider monkey).